The following is a 310-amino-acid chain: Probable manganese-dependent inorganic pyrophosphatase (310 aa).

Mn(2+)-binding residues include His-9, Asp-13, Asp-15, Asp-76, His-98, and Asp-150.

It belongs to the PPase class C family. Requires Mn(2+) as cofactor.

The protein resides in the cytoplasm. The enzyme catalyses diphosphate + H2O = 2 phosphate + H(+). In Streptococcus thermophilus (strain CNRZ 1066), this protein is Probable manganese-dependent inorganic pyrophosphatase.